The chain runs to 638 residues: Paramyosin (638 aa).

A coiled-coil region spans residues 1–638 (FSPSTTRLES…EGDISVMQAD (638 aa)).

Belongs to the paramyosin family. In terms of assembly, homodimer.

Its subcellular location is the cytoplasm. The protein localises to the myofibril. Paramyosin is a major structural component of many thick filaments isolated from invertebrate muscles. The sequence is that of Paramyosin from Opisthorchis felineus.